The sequence spans 290 residues: Prepilin leader peptidase/N-methyltransferase (290 aa).

Residues 14 to 34 traverse the membrane as a helical segment; sequence LYFSLVFLFSLMIGSFLNVVI. Cys74, Cys77, Cys99, and Cys102 together coordinate Zn(2+). 6 consecutive transmembrane segments (helical) span residues 106–126, 130–150, 161–181, 185–205, 232–252, and 261–281; these read ISAR…AVAM, PGWG…LTFI, LTLP…FVSL, VIGA…FKLL, PIVL…LILL, and IPFG…GDSI.

The protein belongs to the peptidase A24 family. Requires Zn(2+) as cofactor.

The protein localises to the cell inner membrane. The catalysed reaction is Typically cleaves a -Gly-|-Phe- bond to release an N-terminal, basic peptide of 5-8 residues from type IV prepilin, and then N-methylates the new N-terminal amino group, the methyl donor being S-adenosyl-L-methionine.. Its function is as follows. Plays an essential role in type IV pili and type II pseudopili formation by proteolytically removing the leader sequence from substrate proteins and subsequently monomethylating the alpha-amino group of the newly exposed N-terminal phenylalanine. This Aeromonas hydrophila protein is Prepilin leader peptidase/N-methyltransferase (tapD).